Here is a 364-residue protein sequence, read N- to C-terminus: Cell cycle control protein 50A (364 aa).

Residues 1-28 (MAMNYSAKDEVDGGPAGPPGGAAKTRRP) form a disordered region. Alanine 2 is subject to N-acetylalanine. Topologically, residues 2–49 (AMNYSAKDEVDGGPAGPPGGAAKTRRPDNTAFKQQRLPAWQPILTAGT) are cytoplasmic. Residues 50 to 70 (VLPTFFIIGLIFIPIGIGIFV) form a helical membrane-spanning segment. At 71-328 (TSNNIREIEI…SWMGGKNPFL (258 aa)) the chain is on the exoplasmic loop side. 3 disulfides stabilise this stretch: cysteine 91/cysteine 104, cysteine 94/cysteine 102, and cysteine 157/cysteine 171. Residue asparagine 98 is glycosylated (N-linked (GlcNAc...) asparagine). Asparagine 297 is a glycosylation site (N-linked (GlcNAc...) asparagine). Residues 329–349 (GIAYITIGSISFLLGVVLLVI) traverse the membrane as a helical segment. At 350–364 (NHKYRNSSNTADITI) the chain is on the cytoplasmic side.

The protein belongs to the CDC50/LEM3 family. As to quaternary structure, component of various P4-ATPase flippase complexes which consists of a catalytic alpha subunit and an accessory beta subunit. Interacts with ATP8A1 to form a flippase complex; this complex forms an intermediate phosphoenzyme. The ATP8A2:TMEM30A flippase complex has been purified, and ATP8B1:TMEM30A and ATP8B2:TMEM30A flippase complexes have been shown to form intermediate phosphoenzymes in vitro. Interacts with alpha subunits ATP8A1, ATP8B1, ATP8B2, ATP8B4, ATP10A, ATP10B, ATP10D, ATP11A, ATP11B and ATP11C. In terms of processing, N-glycosylated. Contains high mannose-type oligosaccharides. As to expression, expressed in photoreceptor cells; detected in retina outer segment (at protein level). Detected in hepatocytes liver sinusoidal endothelial cells and kidney brush border of the proximal tubules (at protein level). Expressed in brain (at protein level).

The protein localises to the membrane. It is found in the cell membrane. It localises to the golgi apparatus. Its subcellular location is the cytoplasmic vesicle. The protein resides in the secretory vesicle membrane. The protein localises to the apical cell membrane. Its function is as follows. Accessory component of a P4-ATPase flippase complex which catalyzes the hydrolysis of ATP coupled to the transport of aminophospholipids from the outer to the inner leaflet of various membranes and ensures the maintenance of asymmetric distribution of phospholipids. Phospholipid translocation also seems to be implicated in vesicle formation and in uptake of lipid signaling molecules. The beta subunit may assist in binding of the phospholipid substrate. Required for the proper folding, assembly and ER to Golgi exit of the ATP8A2:TMEM30A flippase complex. ATP8A2:TMEM30A may be involved in regulation of neurite outgrowth, and, reconstituted to liposomes, predomiminantly transports phosphatidylserine (PS) and to a lesser extent phosphatidylethanolamine (PE). The ATP8A1:TMEM30A flippase complex seems to play a role in regulation of cell migration probably involving flippase-mediated translocation of phosphatidylethanolamine (PE) at the plasma membrane. Required for the formation of the ATP8A2, ATP8B1 and ATP8B2 P-type ATPAse intermediate phosphoenzymes. Involved in uptake of platelet-activating factor (PAF). Can also mediate the export of alpha subunits ATP8A1, ATP8B1, ATP8B2, ATP8B4, ATP10A, ATP10B, ATP10D, ATP11A, ATP11B and ATP11C from the ER to other membrane localizations. This chain is Cell cycle control protein 50A, found in Mus musculus (Mouse).